The primary structure comprises 119 residues: Large ribosomal subunit protein bL20 (119 aa).

The protein belongs to the bacterial ribosomal protein bL20 family.

Binds directly to 23S ribosomal RNA and is necessary for the in vitro assembly process of the 50S ribosomal subunit. It is not involved in the protein synthesizing functions of that subunit. This is Large ribosomal subunit protein bL20 from Shewanella woodyi (strain ATCC 51908 / MS32).